The primary structure comprises 114 residues: uncharacterized protein (114 aa).

This is an uncharacterized protein from Sputnik virophage.